We begin with the raw amino-acid sequence, 325 residues long: 8-oxo-dGDP phosphatase NUDT18 (325 aa).

The Nudix hydrolase domain occupies 38-163 (NVCYIVGAVI…DILSLIDAGL (126 aa)). Position 55 (leucine 55) interacts with Mg(2+). Positions 73 to 94 (GRMEECESILEALQREVREEAG) match the Nudix box motif.

This sequence belongs to the Nudix hydrolase family. Mn(2+) serves as cofactor. Mg(2+) is required as a cofactor.

It carries out the reaction 8-oxo-dGDP + H2O = 8-oxo-dGMP + phosphate + H(+). The enzyme catalyses 8-oxo-dADP + H2O = 8-oxo-dAMP + phosphate + H(+). It catalyses the reaction 2-oxo-dADP + H2O = 2-oxo-dAMP + phosphate + H(+). The catalysed reaction is 8-oxo-GDP + H2O = 8-oxo-GMP + phosphate + H(+). Functionally, mediates the hydrolysis of oxidized nucleoside diphosphate derivatives. Hydrolyzes 8-oxo-7,8-dihydroguanine (8-oxo-Gua)-containing deoxyribo- and ribonucleoside diphosphates to the monophosphates. Hydrolyzes 8-oxo-dGDP and 8-oxo-GDP with the same efficiencies. Also hydrolyzes 8-OH-dADP and 2-OH-dADP. Exhibited no or minimal hydrolysis activity against 8-oxo-dGTP, 8-oxo-GTP, dGTP, GTP, dGDP and GDP. Probably removes oxidized guanine nucleotides from both the DNA and RNA precursor pools. This is 8-oxo-dGDP phosphatase NUDT18 (nudt18) from Danio rerio (Zebrafish).